Here is a 402-residue protein sequence, read N- to C-terminus: Arginine deiminase (402 aa).

Catalysis depends on Cys392, which acts as the Amidino-cysteine intermediate.

It belongs to the arginine deiminase family.

It localises to the cytoplasm. The enzyme catalyses L-arginine + H2O = L-citrulline + NH4(+). It functions in the pathway amino-acid degradation; L-arginine degradation via ADI pathway; carbamoyl phosphate from L-arginine: step 1/2. The protein is Arginine deiminase of Mycolicibacterium gilvum (strain PYR-GCK) (Mycobacterium gilvum (strain PYR-GCK)).